Consider the following 250-residue polypeptide: 2,5-dichloro-2,5-cyclohexadiene-1,4-diol dehydrogenase LinX (250 aa).

NAD(+) is bound by residues D38, D64, V65, Y156, K160, T191, and T194. Y156 serves as the catalytic Proton acceptor.

Belongs to the short-chain dehydrogenases/reductases (SDR) family.

The enzyme catalyses 2,5-dichlorocyclohexa-2,5-dien-1,4-diol + NAD(+) = 2,5-dichlorohydroquinone + NADH + H(+). Catalyzes the degradation of 2,5-dichloro-2,5-cyclohexadiene-1,4-diol (2,5-DDOL) into 2,5-dichlorohydroquinone (2,5-DCHQ) in vitro. LinX appears not to be involved in gamma-hexachlorocyclohexane (gamma-HCH) degradation pathway, in contrast to LinC which has the same enzymatic activity. This chain is 2,5-dichloro-2,5-cyclohexadiene-1,4-diol dehydrogenase LinX, found in Sphingobium indicum (strain DSM 16412 / CCM 7286 / MTCC 6364 / B90A).